The chain runs to 488 residues: Bifunctional protein HldE (488 aa).

Residues 1-330 form a ribokinase region; the sequence is MIDFDGLSNA…RNILPPASLA (330 aa). 205 to 208 contributes to the ATP binding site; it reads NSKE. Asp-275 is an active-site residue. The segment at 358 to 488 is cytidylyltransferase; that stretch reads FTNGCFDILH…TSLVKRAGGA (131 aa).

The protein in the N-terminal section; belongs to the carbohydrate kinase PfkB family. It in the C-terminal section; belongs to the cytidylyltransferase family. In terms of assembly, homodimer.

It carries out the reaction D-glycero-beta-D-manno-heptose 7-phosphate + ATP = D-glycero-beta-D-manno-heptose 1,7-bisphosphate + ADP + H(+). The catalysed reaction is D-glycero-beta-D-manno-heptose 1-phosphate + ATP + H(+) = ADP-D-glycero-beta-D-manno-heptose + diphosphate. It participates in nucleotide-sugar biosynthesis; ADP-L-glycero-beta-D-manno-heptose biosynthesis; ADP-L-glycero-beta-D-manno-heptose from D-glycero-beta-D-manno-heptose 7-phosphate: step 1/4. Its pathway is nucleotide-sugar biosynthesis; ADP-L-glycero-beta-D-manno-heptose biosynthesis; ADP-L-glycero-beta-D-manno-heptose from D-glycero-beta-D-manno-heptose 7-phosphate: step 3/4. Catalyzes the phosphorylation of D-glycero-D-manno-heptose 7-phosphate at the C-1 position to selectively form D-glycero-beta-D-manno-heptose-1,7-bisphosphate. In terms of biological role, catalyzes the ADP transfer from ATP to D-glycero-beta-D-manno-heptose 1-phosphate, yielding ADP-D-glycero-beta-D-manno-heptose. In Nitrobacter winogradskyi (strain ATCC 25391 / DSM 10237 / CIP 104748 / NCIMB 11846 / Nb-255), this protein is Bifunctional protein HldE.